Reading from the N-terminus, the 260-residue chain is Putative protein phosphatase 2C-like protein 44 (260 aa).

Positions 41-259 (YYTVDRLSYA…SSISCVVIRF (219 aa)) constitute a PPM-type phosphatase domain.

This sequence belongs to the PP2C family.

This chain is Putative protein phosphatase 2C-like protein 44, found in Arabidopsis thaliana (Mouse-ear cress).